Reading from the N-terminus, the 203-residue chain is Chromophore lyase CpcT/CpeT 3 (203 aa).

This sequence belongs to the CpcT/CpeT biliprotein lyase family.

Its function is as follows. Covalently attaches a chromophore to Cys residue(s) of phycobiliproteins. The polypeptide is Chromophore lyase CpcT/CpeT 3 (Gloeobacter violaceus (strain ATCC 29082 / PCC 7421)).